A 181-amino-acid polypeptide reads, in one-letter code: Protein Syd (181 aa).

This sequence belongs to the Syd family.

The protein localises to the cell inner membrane. Interacts with the SecY protein in vivo. May bind preferentially to an uncomplexed state of SecY, thus functioning either as a chelating agent for excess SecY in the cell or as a regulatory factor that negatively controls the translocase function. The protein is Protein Syd of Klebsiella pneumoniae subsp. pneumoniae (strain ATCC 700721 / MGH 78578).